The following is a 394-amino-acid chain: Penicillopepsin-2 (394 aa).

A signal peptide spans 1–20 (MVVFSKITVVLAGLATVASA). The propeptide at 21-71 (VPTGTSRKSTFTVNQKARPVAQAKAINLPGMYASALSKYGAAVPASVKAAA) is activation peptide. The Peptidase A1 domain occupies 87-391 (YLTPVNVGGT…DANGPRLGFA (305 aa)). The active site involves aspartate 103. N-linked (GlcNAc...) asparagine glycosylation occurs at asparagine 132. Residue aspartate 283 is part of the active site. A disulfide bridge links cysteine 319 with cysteine 354.

It belongs to the peptidase A1 family. Monomer.

The protein resides in the secreted. It carries out the reaction Hydrolysis of proteins with broad specificity similar to that of pepsin A, preferring hydrophobic residues at P1 and P1', but also cleaving 20-Gly-|-Glu-21 in the B chain of insulin. Clots milk, and activates trypsinogen.. Its function is as follows. Secreted aspartic endopeptidase that allows assimilation of proteinaceous substrates. The scissile peptide bond is attacked by a nucleophilic water molecule activated by two aspartic residues in the active site. Shows a broad primary substrate specificity. Favors hydrophobic residues at the P1 and P1' positions, but can also activate trypsinogen and hydrolyze the B chain of insulin between positions 'Gly-20' and 'Glu-21'. The chain is Penicillopepsin-2 from Penicillium janthinellum (Penicillium vitale).